Here is a 372-residue protein sequence, read N- to C-terminus: N-methyl-L-tryptophan oxidase (372 aa).

Residue 4 to 34 (DLIIIGSGSVGAAAGYYATRAGLNVLMTDAH) participates in FAD binding. C308 is modified (S-8alpha-FAD cysteine).

This sequence belongs to the MSOX/MTOX family. MTOX subfamily. Monomer. FAD serves as cofactor.

The catalysed reaction is N(alpha)-methyl-L-tryptophan + O2 + H2O = L-tryptophan + formaldehyde + H2O2. In terms of biological role, catalyzes the oxidative demethylation of N-methyl-L-tryptophan. The chain is N-methyl-L-tryptophan oxidase from Shigella boydii serotype 18 (strain CDC 3083-94 / BS512).